A 260-amino-acid polypeptide reads, in one-letter code: Proliferating cell nuclear antigen (260 aa).

Residues 61–80 mediate DNA binding; it reads RCDRNISMGMNLGSMAKILK.

The protein belongs to the PCNA family. Homotrimer. Forms a complex with activator 1 heteropentamer in the presence of ATP.

Its subcellular location is the nucleus. In terms of biological role, this protein is an auxiliary protein of DNA polymerase delta and is involved in the control of eukaryotic DNA replication by increasing the polymerase's processibility during elongation of the leading strand. This is Proliferating cell nuclear antigen (PCNA) from Sarcophaga crassipalpis (Flesh fly).